Consider the following 257-residue polypeptide: MKLGVNIDHVAVLREARAVNDPQIIHAMFEAVSGGADQITIHLREDRRHINEDDVKNIINLSPIPVNLECSINSEIIDIVCELKPHRATIVPEKREELTTEGGLSLDSLNLKNVISKLNDNDIKVSLFINPKKNDVIMSKELGATCVELHTGAYANTFLMLNSNLNHTKYKIDNLNLKRGELEILLNSELTRIKEAANISTNLGLEVAAGHGLNYQNVTAISSIKDIFELNIGQSIVAKSVFVGLKNAVKEMMELVK.

Residue N6 coordinates 3-amino-2-oxopropyl phosphate. 1-deoxy-D-xylulose 5-phosphate is bound at residue D8–H9. Residue R17 participates in 3-amino-2-oxopropyl phosphate binding. The active-site Proton acceptor is the H42. 1-deoxy-D-xylulose 5-phosphate is bound by residues R44 and H49. Catalysis depends on E69, which acts as the Proton acceptor. T99 serves as a coordination point for 1-deoxy-D-xylulose 5-phosphate. The Proton donor role is filled by H211. 3-amino-2-oxopropyl phosphate is bound by residues G212 and G233–Q234.

Belongs to the PNP synthase family. As to quaternary structure, homooctamer; tetramer of dimers.

The protein localises to the cytoplasm. The catalysed reaction is 3-amino-2-oxopropyl phosphate + 1-deoxy-D-xylulose 5-phosphate = pyridoxine 5'-phosphate + phosphate + 2 H2O + H(+). It participates in cofactor biosynthesis; pyridoxine 5'-phosphate biosynthesis; pyridoxine 5'-phosphate from D-erythrose 4-phosphate: step 5/5. Catalyzes the complicated ring closure reaction between the two acyclic compounds 1-deoxy-D-xylulose-5-phosphate (DXP) and 3-amino-2-oxopropyl phosphate (1-amino-acetone-3-phosphate or AAP) to form pyridoxine 5'-phosphate (PNP) and inorganic phosphate. The chain is Pyridoxine 5'-phosphate synthase from Campylobacter fetus subsp. fetus (strain 82-40).